The primary structure comprises 333 residues: Flap endonuclease 1 (333 aa).

An N-domain region spans residues 1 to 99; the sequence is MGVALREVLT…ETIESRREVR (99 aa). 7 residues coordinate Mg(2+): D28, D81, E153, E155, D174, D176, and D235. An I-domain region spans residues 117 to 256; it reads EAYKQARASS…TALKIVKKDG (140 aa). Residues 325–333 are interaction with PCNA; the sequence is GQKTLDRWF.

It belongs to the XPG/RAD2 endonuclease family. FEN1 subfamily. As to quaternary structure, interacts with PCNA. PCNA stimulates the nuclease activity without altering cleavage specificity. Mg(2+) is required as a cofactor.

In terms of biological role, structure-specific nuclease with 5'-flap endonuclease and 5'-3' exonuclease activities involved in DNA replication and repair. During DNA replication, cleaves the 5'-overhanging flap structure that is generated by displacement synthesis when DNA polymerase encounters the 5'-end of a downstream Okazaki fragment. Binds the unpaired 3'-DNA end and kinks the DNA to facilitate 5' cleavage specificity. Cleaves one nucleotide into the double-stranded DNA from the junction in flap DNA, leaving a nick for ligation. Also involved in the base excision repair (BER) pathway. Acts as a genome stabilization factor that prevents flaps from equilibrating into structures that lead to duplications and deletions. Also possesses 5'-3' exonuclease activity on nicked or gapped double-stranded DNA. The polypeptide is Flap endonuclease 1 (Methanosphaerula palustris (strain ATCC BAA-1556 / DSM 19958 / E1-9c)).